The chain runs to 385 residues: Lipid-A-disaccharide synthase 2 (385 aa).

The protein belongs to the LpxB family.

The catalysed reaction is a lipid X + a UDP-2-N,3-O-bis[(3R)-3-hydroxyacyl]-alpha-D-glucosamine = a lipid A disaccharide + UDP + H(+). It functions in the pathway bacterial outer membrane biogenesis; LPS lipid A biosynthesis. Functionally, condensation of UDP-2,3-diacylglucosamine and 2,3-diacylglucosamine-1-phosphate to form lipid A disaccharide, a precursor of lipid A, a phosphorylated glycolipid that anchors the lipopolysaccharide to the outer membrane of the cell. In Legionella pneumophila (strain Lens), this protein is Lipid-A-disaccharide synthase 2.